Consider the following 193-residue polypeptide: Orotate phosphoribosyltransferase (193 aa).

Residues Arg85, Lys89, His91, and 111-119 (DDVLTTGKS) each bind 5-phospho-alpha-D-ribose 1-diphosphate. 2 residues coordinate orotate: Thr115 and Arg143.

The protein belongs to the purine/pyrimidine phosphoribosyltransferase family. PyrE subfamily. As to quaternary structure, homodimer. It depends on Mg(2+) as a cofactor.

It carries out the reaction orotidine 5'-phosphate + diphosphate = orotate + 5-phospho-alpha-D-ribose 1-diphosphate. It functions in the pathway pyrimidine metabolism; UMP biosynthesis via de novo pathway; UMP from orotate: step 1/2. Its function is as follows. Catalyzes the transfer of a ribosyl phosphate group from 5-phosphoribose 1-diphosphate to orotate, leading to the formation of orotidine monophosphate (OMP). This chain is Orotate phosphoribosyltransferase, found in Pyrobaculum islandicum (strain DSM 4184 / JCM 9189 / GEO3).